A 324-amino-acid polypeptide reads, in one-letter code: GDP-mannose transporter (324 aa).

At 1–13 (MSELKSRIGNSGS) the chain is on the cytoplasmic side. A helical membrane pass occupies residues 14–34 (IANSGPVSILCYCASSILMTV). Residues 35-44 (TNKFVVNTDG) lie on the Lumenal side of the membrane. The helical transmembrane segment at 45-65 (FNMFFVMLFAQSLVCTMCLMV) threads the bilayer. The Cytoplasmic segment spans residues 66–76 (LKMFGYAKYRP). Residues 77–97 (LNLIDVKNWLPISFLLVFMIF) traverse the membrane as a helical segment. At 98-116 (TSAKALKYMPVPIYTIFKN) the chain is on the lumenal side. A glycan (N-linked (GlcNAc...) asparagine) is linked at Asn116. Residues 117–137 (LTIILIAYGEVLFFGGSVTPM) form a helical membrane-spanning segment. Position 138 (Glu138) is a topological domain, cytoplasmic. The helical transmembrane segment at 139 to 159 (LSSFILMVLSSVVASLGDQQA) threads the bilayer. Over 160-170 (AKIAQPLANNS) the chain is Lumenal. Asn168 is a glycosylation site (N-linked (GlcNAc...) asparagine). A helical membrane pass occupies residues 171–191 (ILSPEYYWMFLNCICSASFVL). The Cytoplasmic segment spans residues 192–204 (IMRKRIKLTNFKD). Residues 205 to 225 (YDTMFYNNALALPILLGFSFL) traverse the membrane as a helical segment. At 226 to 243 (SEDWSSENLAQNFSGESL) the chain is on the lumenal side. Asn237 is a glycosylation site (N-linked (GlcNAc...) asparagine). A helical membrane pass occupies residues 244–264 (SAMIISGMTSVGISYCSGWCV). Over 265–270 (RATSST) the chain is Cytoplasmic. A helical membrane pass occupies residues 271–291 (TYSMVGALNKLPIALAGLIFF). At 292 to 295 (DAPR) the chain is on the lumenal side. Residues 296-316 (NFLSIMSIFIGFASGLSYAVA) traverse the membrane as a helical segment. Over 317–324 (KQKKVQKN) the chain is Cytoplasmic.

The protein belongs to the TPT transporter family. SLC35D subfamily. Homooligomer.

The protein localises to the golgi apparatus membrane. Its subcellular location is the cytoplasmic vesicle membrane. The protein resides in the endoplasmic reticulum membrane. Its function is as follows. Involved in the import of GDP-mannose from the cytoplasm into the Golgi lumen. The sequence is that of GDP-mannose transporter (VRG4) from Candida glabrata (strain ATCC 2001 / BCRC 20586 / JCM 3761 / NBRC 0622 / NRRL Y-65 / CBS 138) (Yeast).